The primary structure comprises 195 residues: Probable GTP-binding protein EngB (195 aa).

The EngB-type G domain maps to 24-195 (ELPEIALAGR…EAWDAILEKL (172 aa)). GTP is bound by residues 32–39 (GRSNVGKS), 59–63 (GKTQL), 77–80 (DVPG), 144–147 (TKAD), and 176–178 (FSS). Mg(2+)-binding residues include S39 and T61.

This sequence belongs to the TRAFAC class TrmE-Era-EngA-EngB-Septin-like GTPase superfamily. EngB GTPase family. Mg(2+) is required as a cofactor.

Its function is as follows. Necessary for normal cell division and for the maintenance of normal septation. This is Probable GTP-binding protein EngB from Streptococcus pneumoniae (strain Hungary19A-6).